The chain runs to 942 residues: Mitogen-activated protein kinase kinase kinase A (942 aa).

Residues 15–96 (FIRIKCILGD…NPTKIISTKF (82 aa)) enclose the PB1 domain. The disordered stretch occupies residues 107-144 (PLSSSLSPTQSLILNNNNNNNNNNNNNNNNNNNNNNNN). The region spanning 170–429 (WQKGQILGRG…ANQLLKHPFI (260 aa)) is the Protein kinase domain. Residues 176–184 (LGRGGYGSV) and Lys-199 contribute to the ATP site. Asp-297 acts as the Proton acceptor in catalysis. The span at 441–486 (ISPTTTLSTNTTNTTATTTTTNNATNSNINQQQQQQQQQPPTRTQR) shows a compositional bias: low complexity. The segment at 441-512 (ISPTTTLSTN…ISTSTSSSSS (72 aa)) is disordered. Positions 487–498 (VSISAGSSNNKR) are enriched in polar residues. Positions 500–512 (TPPISTSTSSSSS) are enriched in low complexity. Residues 513-533 (SILNNFSINIILPINLIILIF) traverse the membrane as a helical segment. In terms of domain architecture, F-box spans 518–564 (FSINIILPINLIILIFREIKPNFVNTLSRVCKHWKQIIDDDELWNKY). WD repeat units lie at residues 607–646 (GHDK…HHNH), 690–733 (GHSG…TLFT), 736–778 (NHQE…STLR), 780–825 (HTGG…KVRS), 828–865 (QHTE…TIST), 872–909 (RQKN…DSRS), and 912–942 (GHHE…WSID).

Belongs to the protein kinase superfamily. STE Ser/Thr protein kinase family. MAP kinase kinase kinase subfamily. Interacts with ubcB and ubpB. Mg(2+) serves as cofactor. Post-translationally, ubcB and ubpB differentially control ubiquitination/deubiquitination and degradation in a cell-type-specific and temporally regulated manner.

The protein localises to the membrane. The enzyme catalyses L-seryl-[protein] + ATP = O-phospho-L-seryl-[protein] + ADP + H(+). It carries out the reaction L-threonyl-[protein] + ATP = O-phospho-L-threonyl-[protein] + ADP + H(+). Functionally, regulates cell-type differentiation and spatial patterning, required for the proper induction and maintenance of prespore cell differentiation. This Dictyostelium discoideum (Social amoeba) protein is Mitogen-activated protein kinase kinase kinase A.